Consider the following 200-residue polypeptide: Late protein I196L (200 aa).

2 repeat units span residues S28–S48 and S49–S69. One copy of the 3; approximate repeat lies at S70–S91.

Belongs to the asfivirus I196L family.

This African swine fever virus (isolate Tick/South Africa/Pretoriuskop Pr4/1996) (ASFV) protein is Late protein I196L.